Consider the following 1123-residue polypeptide: Probable serine/threonine-protein kinase nek3 (1123 aa).

The Protein kinase domain maps to 4–264 (YEEIKTIGKG…VNDILELPFI (261 aa)). Residues 10-18 (IGKGSFGRA) and K33 contribute to the ATP site. D130 serves as the catalytic Proton acceptor. 2 stretches are compositionally biased toward low complexity: residues 283–307 (NNDS…ISSS) and 327–415 (NNNN…TSLK). Disordered stretches follow at residues 283–310 (NNDS…STEV), 325–415 (NINN…TSLK), 440–802 (SKTP…TNSQ), 866–887 (SAST…TNTM), 908–937 (SVKL…SITD), and 990–1020 (SLNN…NQNN). Residues 440–459 (SKTPISGTKNPTTSKITPSI) are compositionally biased toward polar residues. 4 stretches are compositionally biased toward low complexity: residues 478 to 529 (SKPT…SSSV), 557 to 576 (SNLS…SNSQ), 588 to 617 (SPTS…SLKS), and 642 to 653 (NGNSNVNSTVLN). The segment covering 654–665 (RSVSSLSIQHKP) has biased composition (polar residues). Composition is skewed to low complexity over residues 666 to 696 (TNSG…TSTT), 712 to 738 (STPT…TPST), and 752 to 802 (SSNG…TNSQ). Over residues 908 to 935 (SVKLSSKSSSPIKTSSSSSSSSSSSSSI) the composition is skewed to low complexity.

This sequence belongs to the protein kinase superfamily. NEK Ser/Thr protein kinase family. NIMA subfamily.

The enzyme catalyses L-seryl-[protein] + ATP = O-phospho-L-seryl-[protein] + ADP + H(+). It carries out the reaction L-threonyl-[protein] + ATP = O-phospho-L-threonyl-[protein] + ADP + H(+). The polypeptide is Probable serine/threonine-protein kinase nek3 (nek3) (Dictyostelium discoideum (Social amoeba)).